We begin with the raw amino-acid sequence, 194 residues long: MKQKRPKYMQIIDAAVEVIAENGYHQSQVSKIAKQAGVADGTIYLYFKNKEDILISLFKEKMGQFIERMEEDIKEKATAKEKLALVISKHFSLLAGDHNLAIVTQLELRQSNLELRQKINEILKGYLNILDGILTEGIQSGEIKEGLDVRLARQMIFGTIDETVTTWVMNDQKYDLVALSNSVLELLVSGIHNK.

The 61-residue stretch at 5 to 65 (RPKYMQIIDA…SLFKEKMGQF (61 aa)) folds into the HTH tetR-type domain. The segment at residues 28-47 (QVSKIAKQAGVADGTIYLYF) is a DNA-binding region (H-T-H motif).

Homodimer. Binds to DNA.

It localises to the cytoplasm. Its function is as follows. Transcriptional regulator in fatty acid degradation. Represses transcription of genes required for fatty acid transport and beta-oxidation, including acdA, fadA, fadB, fadE, fadF, fadG, fadH, fadM, fadN, lcfA and lcfB. Binding of FadR to DNA is specifically inhibited by long chain fatty acyl-CoA compounds of 14-20 carbon atoms in length. The chain is Fatty acid metabolism regulator protein (fadR) from Bacillus subtilis (strain 168).